We begin with the raw amino-acid sequence, 159 residues long: Gigasin-1 (159 aa).

Disordered stretches follow at residues 1-33 (GKATTKKVEIPERDRYDNGYDNHGHDDFEHDQT) and 80-159 (KESY…KYRR).

As to expression, component of the organic matrix of calcified shell layers.

The polypeptide is Gigasin-1 (Magallana gigas (Pacific oyster)).